The primary structure comprises 116 residues: U11-theraphotoxin-Hhn1b (116 aa).

The N-terminal stretch at 1–21 (MNTVRVAFLLVFVLAVSLGQA) is a signal peptide. The propeptide occupies 22 to 74 (DKDENRMEMQEKTEQGKSYLDFAENLLLQKLEELEAKLLEEDSEESRNSRQKR). Residues 61–83 (EEDSEESRNSRQKRCIGEGVPCD) are disordered. Intrachain disulfides connect Cys75/Cys90, Cys82/Cys95, and Cys89/Cys110.

It belongs to the neurotoxin 14 (magi-1) family. 01 (HNTX-16) subfamily. In terms of tissue distribution, expressed by the venom gland.

The protein localises to the secreted. Functionally, probable ion channel inhibitor. In Cyriopagopus hainanus (Chinese bird spider), this protein is U11-theraphotoxin-Hhn1b.